The primary structure comprises 66 residues: Small ribosomal subunit protein eS27 (66 aa).

Residues cysteine 21, cysteine 24, cysteine 40, and cysteine 43 each contribute to the Zn(2+) site. A C4-type zinc finger spans residues 21–43; that stretch reads CPVCGNEQVIFSHATFPARCLVC.

It belongs to the eukaryotic ribosomal protein eS27 family. Part of the 30S ribosomal subunit. It depends on Zn(2+) as a cofactor.

The polypeptide is Small ribosomal subunit protein eS27 (Hyperthermus butylicus (strain DSM 5456 / JCM 9403 / PLM1-5)).